The chain runs to 396 residues: Elongation factor Tu (396 aa).

One can recognise a tr-type G domain in the interval 10 to 206 (KPHVNVGTIG…ALDSYIPTPE (197 aa)). Residues 19 to 26 (GHVDHGKT) form a G1 region. 19-26 (GHVDHGKT) is a binding site for GTP. T26 contacts Mg(2+). The interval 60–64 (GITIN) is G2. Residues 81–84 (DCPG) are G3. Residues 81–85 (DCPGH) and 136–139 (NKCD) each bind GTP. Residues 136–139 (NKCD) are G4. The segment at 174 to 176 (SAK) is G5.

Belongs to the TRAFAC class translation factor GTPase superfamily. Classic translation factor GTPase family. EF-Tu/EF-1A subfamily. In terms of assembly, monomer.

The protein resides in the cytoplasm. The enzyme catalyses GTP + H2O = GDP + phosphate + H(+). Its function is as follows. GTP hydrolase that promotes the GTP-dependent binding of aminoacyl-tRNA to the A-site of ribosomes during protein biosynthesis. The chain is Elongation factor Tu from Ralstonia nicotianae (strain ATCC BAA-1114 / GMI1000) (Ralstonia solanacearum).